The sequence spans 214 residues: Adenylate kinase (214 aa).

10 to 15 is an ATP binding site; the sequence is GAGKGT. The NMP stretch occupies residues 30–59; sequence STGDLLREEIANNTELGKQAKKLIDGGNLV. Residues T31, R36, 57 to 59, 83 to 86, and Q90 each bind AMP; these read NLV and GFPR. Positions 124 to 161 are LID; sequence LRRQCKNCGNIFNLRFIKNFDGKCPKCGSTDIYQRADD. Residue R125 participates in ATP binding. Residues C128 and C131 each coordinate Zn(2+). 134–135 is an ATP binding site; that stretch reads IF. Zn(2+)-binding residues include C147 and C150. AMP contacts are provided by R158 and R169. Residue K197 coordinates ATP.

This sequence belongs to the adenylate kinase family. Monomer.

Its subcellular location is the cytoplasm. The catalysed reaction is AMP + ATP = 2 ADP. Its pathway is purine metabolism; AMP biosynthesis via salvage pathway; AMP from ADP: step 1/1. In terms of biological role, catalyzes the reversible transfer of the terminal phosphate group between ATP and AMP. Plays an important role in cellular energy homeostasis and in adenine nucleotide metabolism. The polypeptide is Adenylate kinase (Elusimicrobium minutum (strain Pei191)).